Reading from the N-terminus, the 101-residue chain is Protein RADIALIS-like 2 (101 aa).

In terms of domain architecture, SANT spans 9–64 (YGSGSWTVKQNKAFERALAVYDQDTPDRWHNVARAVGGKTPEEAKRQYDLLVRDIE). The segment at 69–101 (GHVPFPDYKTTTGNSNRGRLRDEEKRMRSMKLQ) is disordered.

As to expression, expressed in the funiculus of ovules and in embryos. In young ovules, expression is observed in the adaxial side of the funiculus (the stalk connecting the embryo sac to the placenta). Also expressed in heart-stage embryos, in the cortex and endodermis of the hypocotyl region but not in the cotyledons, shoot and root apical meristems, provasculature or epidermis. Not detected in young seedlings, mature roots or in young floral primordia.

It is found in the nucleus. Its function is as follows. Probable transcription factor. Required for female gametophyte development. The chain is Protein RADIALIS-like 2 (RL2) from Arabidopsis thaliana (Mouse-ear cress).